A 168-amino-acid chain; its full sequence is CS3 fimbrial subunit A (168 aa).

A signal peptide spans 1 to 22 (MLKIKYLLIGLSLSAMSSYSLA).

Post-translationally, a longer minor form, starting at amino acid 15, has been detected by amino acid sequencing. This is probably due to alternative processing of the signal peptide.

Its subcellular location is the fimbrium. In terms of biological role, fimbriae (also called pili), polar filaments radiating from the surface of the bacterium to a length of 0.5-1.5 micrometers and numbering 100-300 per cell, enable bacteria to colonize the epithelium of specific host organs. The chain is CS3 fimbrial subunit A from Escherichia coli.